Reading from the N-terminus, the 466-residue chain is 3-isopropylmalate dehydratase large subunit (466 aa).

3 residues coordinate [4Fe-4S] cluster: Cys347, Cys408, and Cys411.

This sequence belongs to the aconitase/IPM isomerase family. LeuC type 1 subfamily. Heterodimer of LeuC and LeuD. The cofactor is [4Fe-4S] cluster.

The catalysed reaction is (2R,3S)-3-isopropylmalate = (2S)-2-isopropylmalate. The protein operates within amino-acid biosynthesis; L-leucine biosynthesis; L-leucine from 3-methyl-2-oxobutanoate: step 2/4. Its function is as follows. Catalyzes the isomerization between 2-isopropylmalate and 3-isopropylmalate, via the formation of 2-isopropylmaleate. This is 3-isopropylmalate dehydratase large subunit from Herminiimonas arsenicoxydans.